Here is a 169-residue protein sequence, read N- to C-terminus: Peptide deformylase (169 aa).

Residues Cys-91 and His-133 each contribute to the Fe cation site. The active site involves Glu-134. Residue His-137 participates in Fe cation binding.

This sequence belongs to the polypeptide deformylase family. It depends on Fe(2+) as a cofactor.

The enzyme catalyses N-terminal N-formyl-L-methionyl-[peptide] + H2O = N-terminal L-methionyl-[peptide] + formate. In terms of biological role, removes the formyl group from the N-terminal Met of newly synthesized proteins. Requires at least a dipeptide for an efficient rate of reaction. N-terminal L-methionine is a prerequisite for activity but the enzyme has broad specificity at other positions. This Shigella boydii serotype 18 (strain CDC 3083-94 / BS512) protein is Peptide deformylase.